The primary structure comprises 119 residues: Large ribosomal subunit protein bL19 (119 aa).

This sequence belongs to the bacterial ribosomal protein bL19 family.

In terms of biological role, this protein is located at the 30S-50S ribosomal subunit interface and may play a role in the structure and function of the aminoacyl-tRNA binding site. The polypeptide is Large ribosomal subunit protein bL19 (Pelobacter propionicus (strain DSM 2379 / NBRC 103807 / OttBd1)).